We begin with the raw amino-acid sequence, 122 residues long: Ribonuclease P protein component (122 aa).

It belongs to the RnpA family. As to quaternary structure, consists of a catalytic RNA component (M1 or rnpB) and a protein subunit.

It carries out the reaction Endonucleolytic cleavage of RNA, removing 5'-extranucleotides from tRNA precursor.. Functionally, RNaseP catalyzes the removal of the 5'-leader sequence from pre-tRNA to produce the mature 5'-terminus. It can also cleave other RNA substrates such as 4.5S RNA. The protein component plays an auxiliary but essential role in vivo by binding to the 5'-leader sequence and broadening the substrate specificity of the ribozyme. The protein is Ribonuclease P protein component of Roseiflexus castenholzii (strain DSM 13941 / HLO8).